The sequence spans 891 residues: Alanine--tRNA ligase (891 aa).

Zn(2+)-binding residues include H564, H568, C677, and H681.

This sequence belongs to the class-II aminoacyl-tRNA synthetase family. Zn(2+) serves as cofactor.

Its subcellular location is the cytoplasm. The catalysed reaction is tRNA(Ala) + L-alanine + ATP = L-alanyl-tRNA(Ala) + AMP + diphosphate. Catalyzes the attachment of alanine to tRNA(Ala) in a two-step reaction: alanine is first activated by ATP to form Ala-AMP and then transferred to the acceptor end of tRNA(Ala). Also edits incorrectly charged Ser-tRNA(Ala) and Gly-tRNA(Ala) via its editing domain. The polypeptide is Alanine--tRNA ligase (Bradyrhizobium sp. (strain ORS 278)).